We begin with the raw amino-acid sequence, 234 residues long: Large ribosomal subunit protein uL1 (234 aa).

This sequence belongs to the universal ribosomal protein uL1 family. In terms of assembly, part of the 50S ribosomal subunit.

In terms of biological role, binds directly to 23S rRNA. The L1 stalk is quite mobile in the ribosome, and is involved in E site tRNA release. Its function is as follows. Protein L1 is also a translational repressor protein, it controls the translation of the L11 operon by binding to its mRNA. In Escherichia coli O127:H6 (strain E2348/69 / EPEC), this protein is Large ribosomal subunit protein uL1.